Reading from the N-terminus, the 20-residue chain is Cytochrome c oxidase subunit 8B, mitochondrial (20 aa).

A disordered region spans residues 1–20 (LSGKPAKXHLSVGEQAIAMT).

The protein belongs to the cytochrome c oxidase VIII family. Component of the cytochrome c oxidase (complex IV, CIV), a multisubunit enzyme composed of 14 subunits. The complex is composed of a catalytic core of 3 subunits MT-CO1, MT-CO2 and MT-CO3, encoded in the mitochondrial DNA, and 11 supernumerary subunits COX4I, COX5A, COX5B, COX6A, COX6B, COX6C, COX7A, COX7B, COX7C, COX8 and NDUFA4, which are encoded in the nuclear genome. The complex exists as a monomer or a dimer and forms supercomplexes (SCs) in the inner mitochondrial membrane with NADH-ubiquinone oxidoreductase (complex I, CI) and ubiquinol-cytochrome c oxidoreductase (cytochrome b-c1 complex, complex III, CIII), resulting in different assemblies (supercomplex SCI(1)III(2)IV(1) and megacomplex MCI(2)III(2)IV(2)).

The protein resides in the mitochondrion inner membrane. It participates in energy metabolism; oxidative phosphorylation. Its function is as follows. Component of the cytochrome c oxidase, the last enzyme in the mitochondrial electron transport chain which drives oxidative phosphorylation. The respiratory chain contains 3 multisubunit complexes succinate dehydrogenase (complex II, CII), ubiquinol-cytochrome c oxidoreductase (cytochrome b-c1 complex, complex III, CIII) and cytochrome c oxidase (complex IV, CIV), that cooperate to transfer electrons derived from NADH and succinate to molecular oxygen, creating an electrochemical gradient over the inner membrane that drives transmembrane transport and the ATP synthase. Cytochrome c oxidase is the component of the respiratory chain that catalyzes the reduction of oxygen to water. Electrons originating from reduced cytochrome c in the intermembrane space (IMS) are transferred via the dinuclear copper A center (CU(A)) of subunit 2 and heme A of subunit 1 to the active site in subunit 1, a binuclear center (BNC) formed by heme A3 and copper B (CU(B)). The BNC reduces molecular oxygen to 2 water molecules using 4 electrons from cytochrome c in the IMS and 4 protons from the mitochondrial matrix. This chain is Cytochrome c oxidase subunit 8B, mitochondrial, found in Oncorhynchus mykiss (Rainbow trout).